The chain runs to 575 residues: UvrABC system protein C (575 aa).

The GIY-YIG domain occupies 16 to 94 (SQPGVYRMYD…IKLYQPRYNV (79 aa)). Residues 204–239 (DQVLTQLISRMETASQNLEFEEAARIRDQIQAVRRV) form the UVR domain.

This sequence belongs to the UvrC family. In terms of assembly, interacts with UvrB in an incision complex.

The protein localises to the cytoplasm. Its function is as follows. The UvrABC repair system catalyzes the recognition and processing of DNA lesions. UvrC both incises the 5' and 3' sides of the lesion. The N-terminal half is responsible for the 3' incision and the C-terminal half is responsible for the 5' incision. The chain is UvrABC system protein C from Shigella dysenteriae serotype 1 (strain Sd197).